We begin with the raw amino-acid sequence, 350 residues long: Heat-inducible transcription repressor HrcA (350 aa).

This sequence belongs to the HrcA family.

Its function is as follows. Negative regulator of class I heat shock genes (grpE-dnaK-dnaJ and groELS operons). Prevents heat-shock induction of these operons. This chain is Heat-inducible transcription repressor HrcA, found in Limosilactobacillus reuteri (strain DSM 20016) (Lactobacillus reuteri).